The sequence spans 293 residues: Probable flavonol synthase 6 (293 aa).

Positions 156–253 (KAQYVMRINY…RMSWPILVEP (98 aa)) constitute a Fe2OG dioxygenase domain. 164 to 166 (NYY) is a 2-oxoglutarate binding site. 3 residues coordinate Fe cation: H178, D180, and H234. 244-246 (RMS) is a binding site for 2-oxoglutarate.

Belongs to the iron/ascorbate-dependent oxidoreductase family. Fe(2+) serves as cofactor.

It catalyses the reaction a (2R,3R)-dihydroflavonol + 2-oxoglutarate + O2 = a flavonol + succinate + CO2 + H2O. The protein operates within secondary metabolite biosynthesis; flavonoid biosynthesis. This Arabidopsis thaliana (Mouse-ear cress) protein is Probable flavonol synthase 6 (FLS6).